We begin with the raw amino-acid sequence, 21 residues long: 20 kDa chaperonin, chloroplastic (21 aa).

It belongs to the GroES chaperonin family. As to quaternary structure, forms stable complexes with CPN60 in the presence of ATP.

It localises to the plastid. The protein localises to the chloroplast. Seems to function only as a co-chaperone, along with cpn60, and in certain cases is essential for the discharge of biologically active proteins from cpn60. This chain is 20 kDa chaperonin, chloroplastic (CPN21), found in Pisum sativum (Garden pea).